The chain runs to 283 residues: 4-hydroxy-3-methylbut-2-enyl diphosphate reductase (283 aa).

Residue cysteine 12 coordinates [4Fe-4S] cluster. Residues histidine 40 and histidine 73 each coordinate (2E)-4-hydroxy-3-methylbut-2-enyl diphosphate. Positions 40 and 73 each coordinate dimethylallyl diphosphate. The isopentenyl diphosphate site is built by histidine 40 and histidine 73. Cysteine 95 contacts [4Fe-4S] cluster. A (2E)-4-hydroxy-3-methylbut-2-enyl diphosphate-binding site is contributed by histidine 123. Residue histidine 123 participates in dimethylallyl diphosphate binding. Histidine 123 is an isopentenyl diphosphate binding site. Catalysis depends on glutamate 125, which acts as the Proton donor. Threonine 161 is a (2E)-4-hydroxy-3-methylbut-2-enyl diphosphate binding site. Cysteine 189 contacts [4Fe-4S] cluster. (2E)-4-hydroxy-3-methylbut-2-enyl diphosphate-binding residues include serine 217, asparagine 219, and serine 261. Dimethylallyl diphosphate-binding residues include serine 217, asparagine 219, and serine 261. Serine 217, asparagine 219, and serine 261 together coordinate isopentenyl diphosphate.

The protein belongs to the IspH family. [4Fe-4S] cluster is required as a cofactor.

The enzyme catalyses isopentenyl diphosphate + 2 oxidized [2Fe-2S]-[ferredoxin] + H2O = (2E)-4-hydroxy-3-methylbut-2-enyl diphosphate + 2 reduced [2Fe-2S]-[ferredoxin] + 2 H(+). The catalysed reaction is dimethylallyl diphosphate + 2 oxidized [2Fe-2S]-[ferredoxin] + H2O = (2E)-4-hydroxy-3-methylbut-2-enyl diphosphate + 2 reduced [2Fe-2S]-[ferredoxin] + 2 H(+). Its pathway is isoprenoid biosynthesis; dimethylallyl diphosphate biosynthesis; dimethylallyl diphosphate from (2E)-4-hydroxy-3-methylbutenyl diphosphate: step 1/1. The protein operates within isoprenoid biosynthesis; isopentenyl diphosphate biosynthesis via DXP pathway; isopentenyl diphosphate from 1-deoxy-D-xylulose 5-phosphate: step 6/6. In terms of biological role, catalyzes the conversion of 1-hydroxy-2-methyl-2-(E)-butenyl 4-diphosphate (HMBPP) into a mixture of isopentenyl diphosphate (IPP) and dimethylallyl diphosphate (DMAPP). Acts in the terminal step of the DOXP/MEP pathway for isoprenoid precursor biosynthesis. The sequence is that of 4-hydroxy-3-methylbut-2-enyl diphosphate reductase from Citrifermentans bemidjiense (strain ATCC BAA-1014 / DSM 16622 / JCM 12645 / Bem) (Geobacter bemidjiensis).